The primary structure comprises 431 residues: Ribosome assembly protein SQT1 (431 aa).

WD repeat units follow at residues 63 to 102 (KHTD…PKFA), 107 to 146 (GYGE…AQWK), 149 to 192 (SQMQ…GSLE), 199 to 243 (VHQQ…QLFK), 309 to 348 (ELDA…VRHK), and 350 to 387 (VLED…EKFV).

Interacts strongly with QSR1. Part of an oligomeric protein complex that is loosely associated with ribosomes.

Its function is as follows. May be involved in the late step of 60S ribosomal subunit assembly or modification in the cytoplasm. The polypeptide is Ribosome assembly protein SQT1 (SQT1) (Saccharomyces cerevisiae (strain ATCC 204508 / S288c) (Baker's yeast)).